Reading from the N-terminus, the 201-residue chain is Fas apoptotic inhibitory molecule 1 (201 aa).

This sequence belongs to the FAIM1 family.

Its subcellular location is the cytoplasm. Its function is as follows. Plays a role as an inducible effector molecule that mediates Fas resistance produced by surface Ig engagement in B cells. This Rattus norvegicus (Rat) protein is Fas apoptotic inhibitory molecule 1 (Faim).